The primary structure comprises 73 residues: Translation initiation factor IF-1 (73 aa).

An S1-like domain is found at 1-73; sequence MAKKEGALEL…TRGRIVYRHK (73 aa).

It belongs to the IF-1 family. In terms of assembly, component of the 30S ribosomal translation pre-initiation complex which assembles on the 30S ribosome in the order IF-2 and IF-3, IF-1 and N-formylmethionyl-tRNA(fMet); mRNA recruitment can occur at any time during PIC assembly.

The protein localises to the cytoplasm. Functionally, one of the essential components for the initiation of protein synthesis. Stabilizes the binding of IF-2 and IF-3 on the 30S subunit to which N-formylmethionyl-tRNA(fMet) subsequently binds. Helps modulate mRNA selection, yielding the 30S pre-initiation complex (PIC). Upon addition of the 50S ribosomal subunit IF-1, IF-2 and IF-3 are released leaving the mature 70S translation initiation complex. The chain is Translation initiation factor IF-1 from Cutibacterium acnes (strain DSM 16379 / KPA171202) (Propionibacterium acnes).